A 167-amino-acid polypeptide reads, in one-letter code: Transcription factor E (167 aa).

Positions 8–90 (NDKVIRGYLI…LWHLDFSDVE (83 aa)) constitute an HTH TFE/IIEalpha-type domain.

It belongs to the TFE family. In terms of assembly, monomer. Interaction with RNA polymerase subunits RpoF and RpoE is necessary for Tfe stimulatory transcription activity. Able to interact with Tbp and RNA polymerase in the absence of DNA promoter. Interacts both with the preinitiation and elongation complexes.

In terms of biological role, transcription factor that plays a role in the activation of archaeal genes transcribed by RNA polymerase. Facilitates transcription initiation by enhancing TATA-box recognition by TATA-box-binding protein (Tbp), and transcription factor B (Tfb) and RNA polymerase recruitment. Not absolutely required for transcription in vitro, but particularly important in cases where Tbp or Tfb function is not optimal. It dynamically alters the nucleic acid-binding properties of RNA polymerases by stabilizing the initiation complex and destabilizing elongation complexes. Seems to translocate with the RNA polymerase following initiation and acts by binding to the non template strand of the transcription bubble in elongation complexes. In Methanosarcina acetivorans (strain ATCC 35395 / DSM 2834 / JCM 12185 / C2A), this protein is Transcription factor E.